A 301-amino-acid polypeptide reads, in one-letter code: Hepatitis A virus cellular receptor 2 (301 aa).

An N-terminal signal peptide occupies residues 1-21; the sequence is MFSHLPFDCVLLLLLLLLTRS. The Ig-like V-type domain occupies 22-124; it reads SEVEYRAEVG…PGIMNDEKFN (103 aa). Residues 22–202 are Extracellular-facing; that stretch reads SEVEYRAEVG…RDSGATIRIG (181 aa). 3 disulfide bridges follow: Cys38/Cys110, Cys52/Cys63, and Cys58/Cys109. Arg111 contributes to the a 1,2-diacyl-sn-glycero-3-phospho-L-serine binding site. Gly116 is a Ca(2+) binding site. An a 1,2-diacyl-sn-glycero-3-phospho-L-serine-binding site is contributed by Met118. Residue Asn119 coordinates Ca(2+). An O-linked (GalNAc...) threonine glycan is attached at Thr145. Asn172 carries N-linked (GlcNAc...) asparagine glycosylation. The chain crosses the membrane as a helical span at residues 203–223; sequence IYIGAGICAGLALALIFGALI. Residues 224-301 lie on the Cytoplasmic side of the membrane; sequence FKWYSHSKEK…QPLGCRFAMP (78 aa). Tyr265 is subject to Phosphotyrosine; by ITK. Cys296 carries the S-palmitoyl cysteine lipid modification.

This sequence belongs to the immunoglobulin superfamily. TIM family. Interacts with HMGB1; impairs HMGB1 binding to B-DNA and likely HMGB1-mediated innate immune response. Interacts with BAG6. Interacts (phosphorylated) with PIK3R1 and PIK3R2. Interacts (not dependent on its phosphorylation status) with FYN. Interacts (in basal state T-cells) with VAV1; AKT1/2, LCP2, ZAP70, SYK, PIK3R1, FYN, SH3BP2 and SH2D2A. Interacts (in activated T-cells) with LCK and PLCG. Interacts with ILF3; this interaction promotes ILF3 ubiquitination and degradation. In terms of processing, O-glycosylated with core 1 or possibly core 8 glycans. Phosphorylated on tyrosine residues; modestly increased after TCR/CD28 stimulation. Can be phosphorylated in the cytoplasmic domain by FYN. Phosphorylation at Tyr-265 is increased by stimulation with ligand LGALS9. Post-translationally, palmitoylated by ZDHHC9 at Cys-296; palmitoylation stabilizes HAVCR2 by preventing binding to E3 ubiquitin ligase SYVN1, thereby suppressing its polyubiquitination and degradation. In terms of processing, ubiquitinated by SYVN1, leading to polyubiquitination and proteasomal degradation. In terms of tissue distribution, expressed in T-helper type 1 (Th1) lymphocytes. Expressed on regulatory T (Treg) cells after TCR stimulation. Expressed in dendritic cells and natural killer (NK) cells. Expressed in epithelial tissues. Expression is increased on CD4+ and CD8+ T-cells in chronic hepatitis C virus (HCV) infection. In progressive HIV-1 infection, expression is up-regulated on HIV-1-specific CD8 T-cells.

The protein localises to the cell membrane. It is found in the cell junction. Cell surface receptor implicated in modulating innate and adaptive immune responses. Generally accepted to have an inhibiting function. Reports on stimulating functions suggest that the activity may be influenced by the cellular context and/or the respective ligand. Regulates macrophage activation. Inhibits T-helper type 1 lymphocyte (Th1)-mediated auto- and alloimmune responses and promotes immunological tolerance. In CD8+ cells attenuates TCR-induced signaling, specifically by blocking NF-kappaB and NFAT promoter activities resulting in the loss of IL-2 secretion. The function may implicate its association with LCK proposed to impair phosphorylation of TCR subunits, and/or LGALS9-dependent recruitment of PTPRC to the immunological synapse. In contrast, shown to activate TCR-induced signaling in T-cells probably implicating ZAP70, LCP2, LCK and FYN. Expressed on Treg cells can inhibit Th17 cell responses. Receptor for LGALS9. Binding to LGALS9 is believed to result in suppression of T-cell responses; the resulting apoptosis of antigen-specific cells may implicate HAVCR2 phosphorylation and disruption of its association with BAG6. Binding to LGALS9 is proposed to be involved in innate immune response to intracellular pathogens. Expressed on Th1 cells interacts with LGALS9 expressed on Mycobacterium tuberculosis-infected macrophages to stimulate antibactericidal activity including IL-1 beta secretion and to restrict intracellular bacterial growth. However, the function as receptor for LGALS9 has been challenged. Also reported to enhance CD8+ T-cell responses to an acute infection such as by Listeria monocytogenes. Receptor for phosphatidylserine (PtSer); PtSer-binding is calcium-dependent. May recognize PtSer on apoptotic cells leading to their phagocytosis. Mediates the engulfment of apoptotic cells by dendritic cells. Expressed on T-cells, promotes conjugation but not engulfment of apoptotic cells. Expressed on dendritic cells (DCs) positively regulates innate immune response and in synergy with Toll-like receptors promotes secretion of TNF-alpha. In tumor-imfiltrating DCs suppresses nucleic acid-mediated innate immune repsonse by interaction with HMGB1 and interfering with nucleic acid-sensing and trafficking of nucleid acids to endosomes. Expressed on natural killer (NK) cells acts as a coreceptor to enhance IFN-gamma production in response to LGALS9. In contrast, shown to suppress NK cell-mediated cytotoxicity. Negatively regulates NK cell function in LPS-induced endotoxic shock. The protein is Hepatitis A virus cellular receptor 2 (HAVCR2) of Homo sapiens (Human).